The chain runs to 545 residues: ATP synthase subunit alpha (545 aa).

Gly173–Ser180 serves as a coordination point for ATP.

Belongs to the ATPase alpha/beta chains family. F-type ATPases have 2 components, CF(1) - the catalytic core - and CF(0) - the membrane proton channel. CF(1) has five subunits: alpha(3), beta(3), gamma(1), delta(1), epsilon(1). CF(0) has three main subunits: a(1), b(2) and c(9-12). The alpha and beta chains form an alternating ring which encloses part of the gamma chain. CF(1) is attached to CF(0) by a central stalk formed by the gamma and epsilon chains, while a peripheral stalk is formed by the delta and b chains.

It is found in the cell membrane. It catalyses the reaction ATP + H2O + 4 H(+)(in) = ADP + phosphate + 5 H(+)(out). Functionally, produces ATP from ADP in the presence of a proton gradient across the membrane. The alpha chain is a regulatory subunit. In Arthrobacter sp. (strain FB24), this protein is ATP synthase subunit alpha.